Consider the following 442-residue polypeptide: 4-hydroxyphenylpyruvate dioxygenase (442 aa).

VOC domains are found at residues 45-200 (RFHH…GFEA) and 216-376 (RLDH…IFTK). His219, His301, and Glu387 together coordinate Fe cation.

The protein belongs to the 4HPPD family. Requires Fe cation as cofactor.

Its subcellular location is the cytoplasm. The catalysed reaction is 3-(4-hydroxyphenyl)pyruvate + O2 = homogentisate + CO2. The protein operates within amino-acid degradation; L-phenylalanine degradation; acetoacetate and fumarate from L-phenylalanine: step 3/6. It participates in cofactor biosynthesis; prenylquinone biosynthesis. The polypeptide is 4-hydroxyphenylpyruvate dioxygenase (Daucus carota (Wild carrot)).